A 218-amino-acid chain; its full sequence is Glutathione S-transferase Mu 4 (218 aa).

In terms of domain architecture, GST N-terminal spans 2–88 (SMTLGYWDIR…YIARKHNLCG (87 aa)). Residues 7–8 (YW), 46–50 (WLNEK), 59–60 (NL), and 72–73 (QS) contribute to the glutathione site. Residues 90 to 208 (TEEEKIRVDI…KSSRFLPKPL (119 aa)) enclose the GST C-terminal domain. Residue Y116 participates in substrate binding.

Belongs to the GST superfamily. Mu family. As to quaternary structure, homodimer. Expressed in a wide variety of tissues.

The protein localises to the cytoplasm. The enzyme catalyses RX + glutathione = an S-substituted glutathione + a halide anion + H(+). It carries out the reaction 1-chloro-2,4-dinitrobenzene + glutathione = 2,4-dinitrophenyl-S-glutathione + chloride + H(+). It catalyses the reaction (13S,14S)-epoxy-(4Z,7Z,9E,11E,16Z,19Z)-docosahexaenoate + glutathione = (13R)-S-glutathionyl-(14S)-hydroxy-(4Z,7Z,9E,11E,16Z,19Z)-docosahexaenoate. The catalysed reaction is leukotriene C4 = leukotriene A4 + glutathione. Conjugation of reduced glutathione to a wide number of exogenous and endogenous hydrophobic electrophiles. Catalyzes the conjugation of leukotriene A4 with reduced glutathione (GSH) to form leukotriene C4. Can also catalyze the transfer of a glutathionyl group from glutathione (GSH) to 13(S),14(S)-epoxy-docosahexaenoic acid to form maresin conjugate in tissue regeneration 1 (MCTR1), a bioactive lipid mediator that possess potent anti-inflammatory and proresolving actions. In Homo sapiens (Human), this protein is Glutathione S-transferase Mu 4 (GSTM4).